The chain runs to 806 residues: Exonuclease 1 (806 aa).

An N-domain region spans residues M1–N99. Mg(2+) is bound by residues D30, D78, E150, D152, D171, D173, and D225. The segment at R138–S229 is I-domain. 3 disordered regions span residues R337–S426, H443–P475, and E512–L754. Positions R355 to Y378 are enriched in polar residues. Residues P412–T425 show a composition bias toward basic and acidic residues. Polar residues-rich tracts occupy residues T447–N458, S533–L542, and W578–V589. A compositionally biased stretch (basic and acidic residues) spans P592–R601. The segment covering S602–F615 has biased composition (polar residues). Low complexity predominate over residues S651–S670. Over residues N676 to S685 the composition is skewed to basic and acidic residues. Over residues V686–L696 the composition is skewed to low complexity. Polar residues predominate over residues K744–L754.

This sequence belongs to the XPG/RAD2 endonuclease family. EXO1 subfamily. Mg(2+) is required as a cofactor.

Its subcellular location is the nucleus. In terms of biological role, 5'-&gt;3' double-stranded DNA exonuclease which may also contain a cryptic 3'-&gt;5' double-stranded DNA exonuclease activity. Also exhibits endonuclease activity against 5'-overhanging flap structures similar to those generated by displacement synthesis when DNA polymerase encounters the 5'-end of a downstream Okazaki fragment. Required for DNA mismatch repair (MMR). This chain is Exonuclease 1 (exo1), found in Danio rerio (Zebrafish).